The following is a 685-amino-acid chain: DNA ligase (685 aa).

NAD(+)-binding positions include Asp-39 to Asp-43, Ser-88 to Leu-89, and Glu-119. Lys-121 acts as the N6-AMP-lysine intermediate in catalysis. Residues Arg-142, Glu-182, Lys-302, and Lys-326 each coordinate NAD(+). Zn(2+) is bound by residues Cys-420, Cys-423, Cys-438, and Cys-443. Residues Asp-606–Gly-685 form the BRCT domain.

The protein belongs to the NAD-dependent DNA ligase family. LigA subfamily. Mg(2+) is required as a cofactor. It depends on Mn(2+) as a cofactor.

It catalyses the reaction NAD(+) + (deoxyribonucleotide)n-3'-hydroxyl + 5'-phospho-(deoxyribonucleotide)m = (deoxyribonucleotide)n+m + AMP + beta-nicotinamide D-nucleotide.. DNA ligase that catalyzes the formation of phosphodiester linkages between 5'-phosphoryl and 3'-hydroxyl groups in double-stranded DNA using NAD as a coenzyme and as the energy source for the reaction. It is essential for DNA replication and repair of damaged DNA. The polypeptide is DNA ligase (Desulforapulum autotrophicum (strain ATCC 43914 / DSM 3382 / VKM B-1955 / HRM2) (Desulfobacterium autotrophicum)).